A 320-amino-acid chain; its full sequence is Probable L-ascorbate peroxidase 5, chloroplastic (320 aa).

The transit peptide at 1–42 directs the protein to the chloroplast; the sequence is MAVVHRILRRGLSAASPLPSLRGLLLVSPQELGRRPASSSSS. Residue His80 is the Proton acceptor of the active site. A heme b-binding site is contributed by His209. A K(+)-binding site is contributed by Thr210. The disordered stretch occupies residues 213-241; it reads RARPERSGWGKPETKYTENGPGAPGGQSW. The span at 214 to 228 shows a compositional bias: basic and acidic residues; it reads ARPERSGWGKPETKY. Positions 242 and 249 each coordinate K(+).

Belongs to the peroxidase family. Ascorbate peroxidase subfamily. Requires heme b as cofactor. As to expression, expressed in leaves, stems and flowers.

The protein resides in the plastid. It localises to the chloroplast stroma. It carries out the reaction L-ascorbate + H2O2 = L-dehydroascorbate + 2 H2O. In terms of biological role, plays a key role in hydrogen peroxide removal. This chain is Probable L-ascorbate peroxidase 5, chloroplastic, found in Oryza sativa subsp. japonica (Rice).